The following is a 459-amino-acid chain: MQVSVETLEGLERKVTVSVPTEKVEEEVSSRLRNLARKVKIDGFRPGKVPFNVVKSRFSDSVREEVAREMVQSTLYEALQKNELVPAGYPHVEPLEIEPGKDFKYTAVFEVMPVFEIVELNQAPVELIQSEVTDKDVDNMIEKLREQNKEWHEVTHAVKKGDKVVIDFQGFLDDKPFQGGSAEGYELVIGSGSMIPGFEDGIVGGKIDKPFDIKVSFPEDYGHKDLAGKEATFKITIKKIMEGKLPALDEAFAEKFNIKEGGIESLKKDIRENMARELERRVNMMNREKLFDSLMSVNHVELPIALIDKEIEHLKHDMYHRLFGHEHKDDEKIPDFPRELFEEQAKRRVHLGLLFAEYVKKHEIVADNDKVNAMIDKFASAYESPDELRAWYQSSKEHMAEVEALVMEDMVADKIAEDAKLKYKNMDYDSVMNPKKGTEKKGELACQAIQIILSVMQAD.

In terms of domain architecture, PPIase FKBP-type spans 161–246 (GDKVVIDFQG…IKKIMEGKLP (86 aa)).

This sequence belongs to the FKBP-type PPIase family. Tig subfamily.

Its subcellular location is the cytoplasm. The enzyme catalyses [protein]-peptidylproline (omega=180) = [protein]-peptidylproline (omega=0). Functionally, involved in protein export. Acts as a chaperone by maintaining the newly synthesized protein in an open conformation. Functions as a peptidyl-prolyl cis-trans isomerase. This is Trigger factor from Legionella pneumophila (strain Corby).